The chain runs to 348 residues: Papaya proteinase 4 (348 aa).

Positions 1 to 18 (MAIICSFSKLLFVAICLF) are cleaved as a signal peptide. The propeptide at 19-132 (GHMSLSYCDF…EEFVNEDIVD (114 aa)) is activation peptide. Disulfide bonds link C154/C195, C188/C227, and C285/C336. C157 is a catalytic residue. Catalysis depends on residues H291 and N311.

Belongs to the peptidase C1 family.

It catalyses the reaction Preferential cleavage: Gly-|-Xaa, in proteins and in small molecule substrates.. Not inhibited by cystatin. Functionally, thiol protease with a substrate specificity very different from the other thiol proteases. The protein is Papaya proteinase 4 of Carica papaya (Papaya).